The primary structure comprises 129 residues: Translation initiation factor 5A (129 aa).

Lys36 bears the Hypusine mark.

The protein belongs to the eIF-5A family.

It is found in the cytoplasm. Its function is as follows. Functions by promoting the formation of the first peptide bond. This is Translation initiation factor 5A from Picrophilus torridus (strain ATCC 700027 / DSM 9790 / JCM 10055 / NBRC 100828 / KAW 2/3).